Here is a 257-residue protein sequence, read N- to C-terminus: Ribonuclease HII (257 aa).

Residues 72-257 (ERVAGIDEVG…FSPVQKILQA (186 aa)) enclose the RNase H type-2 domain. Residues aspartate 78, glutamate 79, and aspartate 170 each contribute to the a divalent metal cation site.

This sequence belongs to the RNase HII family. It depends on Mn(2+) as a cofactor. Mg(2+) is required as a cofactor.

The protein resides in the cytoplasm. It carries out the reaction Endonucleolytic cleavage to 5'-phosphomonoester.. Functionally, endonuclease that specifically degrades the RNA of RNA-DNA hybrids. This chain is Ribonuclease HII, found in Levilactobacillus brevis (strain ATCC 367 / BCRC 12310 / CIP 105137 / JCM 1170 / LMG 11437 / NCIMB 947 / NCTC 947) (Lactobacillus brevis).